Consider the following 207-residue polypeptide: Transcription antitermination protein NusB (207 aa).

Belongs to the NusB family.

In terms of biological role, involved in transcription antitermination. Required for transcription of ribosomal RNA (rRNA) genes. Binds specifically to the boxA antiterminator sequence of the ribosomal RNA (rrn) operons. This is Transcription antitermination protein NusB from Trichodesmium erythraeum (strain IMS101).